Consider the following 254-residue polypeptide: Ribosomal RNA small subunit methyltransferase G (254 aa).

S-adenosyl-L-methionine is bound by residues G84, F89, V136 to E137, and R155. Residues H231 to S254 form a disordered region.

It belongs to the methyltransferase superfamily. RNA methyltransferase RsmG family.

Its subcellular location is the cytoplasm. Functionally, specifically methylates the N7 position of a guanine in 16S rRNA. The protein is Ribosomal RNA small subunit methyltransferase G of Synechococcus sp. (strain WH7803).